We begin with the raw amino-acid sequence, 67 residues long: Large ribosomal subunit protein uL29 (67 aa).

The protein belongs to the universal ribosomal protein uL29 family.

The protein is Large ribosomal subunit protein uL29 of Magnetococcus marinus (strain ATCC BAA-1437 / JCM 17883 / MC-1).